Reading from the N-terminus, the 255-residue chain is NAP1-related protein 2 (255 aa).

Residues 19–60 (IDAELVLSIEKLQEIQDDLEKINEKASDEVLEVEQKYNVIRK) are a coiled coil. Residues 213-255 (NPLTYFNNDADEEDFDGDDDGDEEEKEGDSDEDDDEEDEVGEE) are disordered. Residues 221–255 (DADEEDFDGDDDGDEEEKEGDSDEDDDEEDEVGEE) show a composition bias toward acidic residues.

This sequence belongs to the nucleosome assembly protein (NAP) family. As to quaternary structure, can form homomeric and heteromeric protein complexes with NRP1. Binds histones H2A and H2B and associates with chromatin in vivo. As to expression, ubiquitous.

Its subcellular location is the cytoplasm. It is found in the nucleus. In terms of biological role, acts as a histone H2A/H2B chaperone in nucleosome assembly, playing a critical role for the correct expression of genes involved in root proliferation and patterning. Required with NRP1 for the maintenance of cell proliferation and differentiation in postembryonic root growth. Involved in both intramolecular and intermolecular somatic homologous recombination. In Arabidopsis thaliana (Mouse-ear cress), this protein is NAP1-related protein 2 (NRP2).